A 79-amino-acid polypeptide reads, in one-letter code: Small ribosomal subunit protein uS17 (79 aa).

The protein belongs to the universal ribosomal protein uS17 family. As to quaternary structure, part of the 30S ribosomal subunit.

Its function is as follows. One of the primary rRNA binding proteins, it binds specifically to the 5'-end of 16S ribosomal RNA. This chain is Small ribosomal subunit protein uS17, found in Paramagnetospirillum magneticum (strain ATCC 700264 / AMB-1) (Magnetospirillum magneticum).